Reading from the N-terminus, the 153-residue chain is MSLDLALDIQHATTCDWLPTDEQFALWATTAIGNSMDEAELTIRIVDSRESQMLNSTYRGKDKPTNVLSFPFEAPPEIELPLLGDLVICAAVVENEAREQQKTLEAHWAHMVVHGCLHLLGYDHIEDEEAEEMESLETQLIEGLGFTDPYKEQ.

Zn(2+)-binding residues include His114, His118, and His124.

This sequence belongs to the endoribonuclease YbeY family. Requires Zn(2+) as cofactor.

The protein localises to the cytoplasm. Functionally, single strand-specific metallo-endoribonuclease involved in late-stage 70S ribosome quality control and in maturation of the 3' terminus of the 16S rRNA. In Shewanella baltica (strain OS223), this protein is Endoribonuclease YbeY.